Here is a 385-residue protein sequence, read N- to C-terminus: SH3 domain-binding protein 5-like (385 aa).

Residues 1–58 (MAELRQIPGGRETPQGELRPEVVEDEVPRSPVAEEPGGGGSNSSEAKLSPREEEELDP) are disordered. Thr-13 is subject to Phosphothreonine. The span at 18-28 (LRPEVVEDEVP) shows a compositional bias: basic and acidic residues. A phosphoserine mark is found at Ser-30 and Ser-49. Coiled coils occupy residues 59 to 140 (RIQE…YERA) and 169 to 272 (WQEM…EQIH). The interval 272-328 (HARRRGQPAHTPGQRRSSPVGAEAGPDGGEDADSGIIEGAEGGGLEEGVSLGPGAAP) is disordered. The span at 318–328 (EGVSLGPGAAP) shows a compositional bias: low complexity. Phosphoserine occurs at positions 343, 350, 358, and 362. The disordered stretch occupies residues 359-385 (DHTSLDGQELGPRSGGRGGRHQRSISL). Residues 376–385 (GGRHQRSISL) show a composition bias toward basic residues.

Belongs to the SH3BP5 family.

In terms of biological role, functions as a guanine nucleotide exchange factor (GEF) for RAB11A. This Bos taurus (Bovine) protein is SH3 domain-binding protein 5-like (SH3BP5L).